Consider the following 551-residue polypeptide: Dihydroxy-acid dehydratase (551 aa).

Residue Asp78 participates in Mg(2+) binding. [2Fe-2S] cluster is bound at residue Cys119. Mg(2+)-binding residues include Asp120 and Lys121. Lys121 carries the post-translational modification N6-carboxylysine. Cys191 contributes to the [2Fe-2S] cluster binding site. Residue Glu441 participates in Mg(2+) binding. Residue Ser467 is the Proton acceptor of the active site.

This sequence belongs to the IlvD/Edd family. As to quaternary structure, homodimer. The cofactor is [2Fe-2S] cluster. Requires Mg(2+) as cofactor.

It catalyses the reaction (2R)-2,3-dihydroxy-3-methylbutanoate = 3-methyl-2-oxobutanoate + H2O. The enzyme catalyses (2R,3R)-2,3-dihydroxy-3-methylpentanoate = (S)-3-methyl-2-oxopentanoate + H2O. The protein operates within amino-acid biosynthesis; L-isoleucine biosynthesis; L-isoleucine from 2-oxobutanoate: step 3/4. It participates in amino-acid biosynthesis; L-valine biosynthesis; L-valine from pyruvate: step 3/4. Its function is as follows. Functions in the biosynthesis of branched-chain amino acids. Catalyzes the dehydration of (2R,3R)-2,3-dihydroxy-3-methylpentanoate (2,3-dihydroxy-3-methylvalerate) into 2-oxo-3-methylpentanoate (2-oxo-3-methylvalerate) and of (2R)-2,3-dihydroxy-3-methylbutanoate (2,3-dihydroxyisovalerate) into 2-oxo-3-methylbutanoate (2-oxoisovalerate), the penultimate precursor to L-isoleucine and L-valine, respectively. The protein is Dihydroxy-acid dehydratase of Pyrococcus furiosus (strain ATCC 43587 / DSM 3638 / JCM 8422 / Vc1).